The chain runs to 60 residues: Protein translocase subunit SecE (60 aa).

Residues 31–51 (IIVVSTVIFFLVFFYALDIGI) traverse the membrane as a helical segment.

This sequence belongs to the SecE/SEC61-gamma family. In terms of assembly, component of the Sec protein translocase complex. Heterotrimer consisting of SecY, SecE and SecG subunits. The heterotrimers can form oligomers, although 1 heterotrimer is thought to be able to translocate proteins. Interacts with the ribosome. Interacts with SecDF, and other proteins may be involved. Interacts with SecA.

It localises to the cell membrane. In terms of biological role, essential subunit of the Sec protein translocation channel SecYEG. Clamps together the 2 halves of SecY. May contact the channel plug during translocation. The protein is Protein translocase subunit SecE of Staphylococcus epidermidis (strain ATCC 35984 / DSM 28319 / BCRC 17069 / CCUG 31568 / BM 3577 / RP62A).